A 354-amino-acid polypeptide reads, in one-letter code: S-adenosylmethionine:tRNA ribosyltransferase-isomerase (354 aa).

This sequence belongs to the QueA family. In terms of assembly, monomer.

It is found in the cytoplasm. It catalyses the reaction 7-aminomethyl-7-carbaguanosine(34) in tRNA + S-adenosyl-L-methionine = epoxyqueuosine(34) in tRNA + adenine + L-methionine + 2 H(+). It functions in the pathway tRNA modification; tRNA-queuosine biosynthesis. Its function is as follows. Transfers and isomerizes the ribose moiety from AdoMet to the 7-aminomethyl group of 7-deazaguanine (preQ1-tRNA) to give epoxyqueuosine (oQ-tRNA). This chain is S-adenosylmethionine:tRNA ribosyltransferase-isomerase, found in Pseudomonas syringae pv. syringae (strain B728a).